The chain runs to 310 residues: MTNFEKIIAQNRLKTNAVLTTYCAIFAFIGLLVDAIRINANDLGIALFKLMTFQIFPTITIVMFVVAFVIILVCIQNFSSIMLSGDEYKLIDPSKVLSSKENQIHRLLLELLEEAKLHFEPKLYIINAPYMNAFASGWDESNSLIALTSALIERLDRDELKAVIAHELSHIRHNDIRLTMCVGILSNIMLLVANFSVYFFMGNRKNSGANLARMILWVLQIILPFLTLLLQMYLSRTREYMADSGAAFLMHDNKPMIRALQKISNDYTNNDYKEIDKNSTRSAAYLFNAEMFSTHPSIKNRIQSLRKRVI.

Transmembrane regions (helical) follow at residues 16 to 36 (NAVLTTYCAIFAFIGLLVDAI) and 55 to 75 (IFPTITIVMFVVAFVIILVCI). His166 lines the Zn(2+) pocket. The active site involves Glu167. His170 contributes to the Zn(2+) binding site. Transmembrane regions (helical) follow at residues 182–202 (VGILSNIMLLVANFSVYFFMG) and 214–234 (MILWVLQIILPFLTLLLQMYL). Residue Glu239 coordinates Zn(2+).

This sequence belongs to the peptidase M48B family. It depends on Zn(2+) as a cofactor.

The protein localises to the cell inner membrane. This is Protease HtpX homolog from Helicobacter pylori (strain J99 / ATCC 700824) (Campylobacter pylori J99).